The primary structure comprises 611 residues: Sodium-coupled monocarboxylate transporter 1 (611 aa).

Topologically, residues 1–9 (MDASRDIGS) are extracellular. The chain crosses the membrane as a helical span at residues 10–30 (FVVWDYVVFAGMLLISAAIGI). Topologically, residues 31–51 (YYAFAGGGQQTSKDFLMGGRS) are cytoplasmic. A helical transmembrane segment spans residues 52–72 (MSAVPVALSLTASFMSAVTVL). At 73-86 (GTPAEVYRFGAIFS) the chain is on the extracellular side. Residues 87-107 (IFVITYFFVVVISAEVFLPVF) traverse the membrane as a helical segment. Residues 108–132 (YRLGITSTYEYLELRFNRCIRLCGT) are Cytoplasmic-facing. Residues 133-153 (ILFIVQTILYTGIVIYAPALA) traverse the membrane as a helical segment. Topologically, residues 154–161 (LNQVTGFD) are extracellular. The helical transmembrane segment at 162 to 182 (LWGAVVATGVVCTFYCTLGGL) threads the bilayer. The Cytoplasmic portion of the chain corresponds to 183-184 (KA). Residues 185 to 205 (VVWTDVFQVGIMVAGFASVII) form a helical membrane-spanning segment. Residues 206–239 (QASITQHGINKILSDAFNGGRLNFWNFDPNPLQR) lie on the Extracellular side of the membrane. Residues 240-260 (HTFWTIVIGGTFTWTTIYGVN) form a helical membrane-spanning segment. At 261 to 279 (QSQVQRYISCKSRLHAKLS) the chain is on the cytoplasmic side. A helical transmembrane segment spans residues 280–300 (LYVNLVGLWVILTCSIFCGLA). Topologically, residues 301 to 336 (LYSRYRECDPWTSKKVSAIDQLMPYLVLDILKNYPG) are extracellular. A helical transmembrane segment spans residues 337 to 359 (VPGLFVACAYSGTLSTVSSSINA). Residues 360 to 389 (LAAVTVEDLIKPRFKSLSEKSLSWISQGMS) are Cytoplasmic-facing. Residues 390–410 (VLYGALCIGMAALASLMGALL) traverse the membrane as a helical segment. The Extracellular segment spans residues 411-415 (QAALS). Residues 416-436 (IFGMVGGPLLGLFSLGILVPF) form a helical membrane-spanning segment. Residues 437–439 (ANS) lie on the Cytoplasmic side of the membrane. The chain crosses the membrane as a helical span at residues 440-460 (IGALTGLLAGFAISLWVGIGA). Residues 461-518 (QLYPPLPERTLPLPLETYGCNITHNGSDWMSTTEMPFSTSAFQIHNAERTPLMDNWYS) lie on the Extracellular side of the membrane. The N-linked (GlcNAc...) asparagine glycan is linked to Asn485. A helical membrane pass occupies residues 519–539 (LSYLYFSTIGTLTTLFVGILI). The Cytoplasmic segment spans residues 540–611 (SLSTGGRKQN…HSGKINGTRL (72 aa)). The PDZ-binding motif lies at 609–611 (TRL).

It belongs to the sodium:solute symporter (SSF) (TC 2.A.21) family. As to quaternary structure, interacts (via PDZ-binding motif) with PDZK1 (via PDZ domains 1 and 3); interaction increases nicotinate transport activity of SLC5A8. As to expression, expressed in brain, colon, kidney and in the ileum and jejunum of small intestine. In the kidney, expression occurred in the proximal tubule and the loop of Henle, being restricted to tubular epithelial cells in both the cortex and the medulla. In the colon, predominantly expressed in the distal half of the large bowel and in the most terminal ileum. Localized selectively in the luminal surface of crypts in the large intestine and to the brush border in the middle parts of crypts in the cecum. In the brain, expression was seen throughout, exclusively in neurons, including the cortex, hippocampus, cerebellum and pituitary gland (at protein level). Expression is reduced in oligodendrogliomas.

It is found in the apical cell membrane. The enzyme catalyses (S)-lactate(out) + 2 Na(+)(out) = (S)-lactate(in) + 2 Na(+)(in). It carries out the reaction propanoate(out) + 2 Na(+)(out) = propanoate(in) + 2 Na(+)(in). It catalyses the reaction pyruvate(out) + 2 Na(+)(out) = pyruvate(in) + 2 Na(+)(in). The catalysed reaction is acetate(out) + 2 Na(+)(out) = acetate(in) + 2 Na(+)(in). The enzyme catalyses butanoate(out) + 2 Na(+)(out) = butanoate(in) + 2 Na(+)(in). It carries out the reaction nicotinate(out) + 2 Na(+)(out) = nicotinate(in) + 2 Na(+)(in). It catalyses the reaction (R)-3-hydroxybutanoate(out) + 2 Na(+)(out) = (R)-3-hydroxybutanoate(in) + 2 Na(+)(in). The catalysed reaction is acetoacetate(out) + 2 Na(+)(out) = acetoacetate(in) + 2 Na(+)(in). The enzyme catalyses 4-methyl-2-oxopentanoate(out) + 2 Na(+)(out) = 4-methyl-2-oxopentanoate(in) + 2 Na(+)(in). It carries out the reaction 5-oxo-L-proline(out) + 2 Na(+)(out) = 5-oxo-L-proline(in) + 2 Na(+)(in). It catalyses the reaction iodide(out) = iodide(in). The catalysed reaction is chloride(in) = chloride(out). The enzyme catalyses nitrate(in) = nitrate(out). It carries out the reaction bromide(in) = bromide(out). Transport of D-lactate and pyruvate stimulated by alpha-cyano-4-hydroxycinnamic acid, but inhibited by the short-chain fatty acids acetate, propionate and butyrate. In terms of biological role, acts as an electrogenic sodium (Na(+)) and chloride (Cl-)-dependent sodium-coupled solute transporter, including transport of monocarboxylates (short-chain fatty acids including L-lactate, D-lactate, pyruvate, acetate, propionate, valerate and butyrate), mocarboxylate drugs (nicotinate, benzoate, salicylate and 5-aminosalicylate) and ketone bodies (beta-D-hydroxybutyrate, acetoacetate and alpha-ketoisocaproate), with a Na(+):substrate stoichiometry of between 4:1 and 2:1. Catalyzes passive carrier mediated diffusion of iodide. Mediates iodide transport from the thyrocyte into the colloid lumen through the apical membrane. May be responsible for the absorption of D-lactate and monocarboxylate drugs from the intestinal tract. May play a critical role in the entry of L-lactate and ketone bodies into neurons by a process driven by an electrochemical Na(+) gradient and hence contribute to the maintenance of the energy status and function of neurons. Mediates sodium-coupled electrogenic transport of pyroglutamate (5-oxo-L-proline). Can mediate the transport of chloride, bromide, iodide and nitrate ions when external concentration of sodium ions is reduced. The protein is Sodium-coupled monocarboxylate transporter 1 of Mus musculus (Mouse).